A 151-amino-acid polypeptide reads, in one-letter code: Copper transporter 3 (151 aa).

2 consecutive transmembrane segments (helical) span residues 52–72 (LKMYWVCLAVIFVISAFSECL) and 103–123 (YLVMLAVMSFNGGVFVAAMAG).

This sequence belongs to the copper transporter (Ctr) (TC 1.A.56) family. SLC31A subfamily. Highly expressed in stems and at lower levels in leaves and flowers.

It is found in the membrane. Involved in the transport of copper. The polypeptide is Copper transporter 3 (COPT3) (Arabidopsis thaliana (Mouse-ear cress)).